The primary structure comprises 224 residues: Myogenin (224 aa).

Phosphoserine; by CaMK2G occurs at positions 77 and 79. The bHLH domain occupies 81-132; the sequence is DRRRAATLREKRRLKKVNEAFEALKRSTLLNPNQRLPKVEILRSAIQYIERL. The residue at position 87 (threonine 87) is a Phosphothreonine; by CaMK2G.

In terms of assembly, homodimer and heterodimer with E12; heterodimerization enhances MYOG DNA-binding and transcriptional activities. Interacts with SMARCA4/BRG1/BAF190A. Interacts (via C-terminal region) with SSRP1 and SUPT16H; the interaction is indicative of an interaction with the FACT complex. Interacts with CSRP3. Post-translationally, phosphorylated by CAMK2G on threonine and serine amino acids in a muscle activity-dependent manner. Phosphorylation of Thr-87 impairs both DNA-binding and trans-activation functions in contracting muscles.

It is found in the nucleus. In terms of biological role, acts as a transcriptional activator that promotes transcription of muscle-specific target genes and plays a role in muscle differentiation, cell cycle exit and muscle atrophy. Essential for the development of functional embryonic skeletal fiber muscle differentiation. However is dispensable for postnatal skeletal muscle growth; phosphorylation by CAMK2G inhibits its transcriptional activity in respons to muscle activity. Required for the recruitment of the FACT complex to muscle-specific promoter regions, thus promoting gene expression initiation. During terminal myoblast differentiation, plays a role as a strong activator of transcription at loci with an open chromatin structure previously initiated by MYOD1. Together with MYF5 and MYOD1, co-occupies muscle-specific gene promoter core regions during myogenesis. Also cooperates with myocyte-specific enhancer factor MEF2D and BRG1-dependent recruitment of SWI/SNF chromatin-remodeling enzymes to alter chromatin structure at myogenic late gene promoters. Facilitates cell cycle exit during terminal muscle differentiation through the up-regulation of miR-20a expression, which in turn represses genes involved in cell cycle progression. Binds to the E-box containing (E1) promoter region of the miR-20a gene. Also plays a role in preventing reversal of muscle cell differentiation. Contributes to the atrophy-related gene expression in adult denervated muscles. Induces fibroblasts to differentiate into myoblasts. The sequence is that of Myogenin (MYOG) from Bos taurus (Bovine).